A 1112-amino-acid chain; its full sequence is Constitutive coactivator of PPAR-gamma-like protein 1 (1112 aa).

Residues Pro-339–Leu-403 form an interaction with YES1, SRC and FYN region. Residues Gln-372 to Gln-525 are disordered. Polar residues-rich tracts occupy residues Leu-403 to Asn-418 and Ser-433 to His-445. Basic and acidic residues predominate over residues Gly-479–Lys-500. Positions Gly-503–Gln-512 are enriched in polar residues. Thr-653 carries the post-translational modification Phosphothreonine. The segment at Ala-827–Glu-1112 is RNA binding. Omega-N-methylarginine is present on residues Arg-871, Arg-882, and Arg-884. The tract at residues Ala-919–Gly-943 is disordered. Residues Gly-922–Gly-934 are compositionally biased toward polar residues. Position 930 is an N6-acetyllysine (Lys-930). Ser-958 carries the phosphoserine modification. Omega-N-methylarginine occurs at positions 980 and 984. Phosphoserine is present on residues Ser-1021 and Ser-1042. The tract at residues Lys-1030–Ala-1090 is disordered. The segment covering His-1070–Ala-1090 has biased composition (polar residues).

It belongs to the constitutive coactivator of PPAR-gamma family. Interacts with PURA. Interacts with SRC family protein kinases YES1, SRC and FYN. Upon tyrosine phosphorylation, interacts with PIK3R1. Interacts with IGF2BP1/IMP-1 in an RNA-dependent manner. Post-translationally, arg-980 is dimethylated, probably to asymmetric dimethylarginine. Phosphorylated on tyrosine by src family kinases upon ultraviolet exposure. In the brain, predominantly expressed in the hippocampus, caudate putamen, cerebral cortex and cerebellum. Expression is restricted to neurons (at protein level).

The protein localises to the cytoplasm. Its subcellular location is the cell membrane. Functionally, component of the oxidative stress-induced survival signaling. May regulate the activation of SRC family protein kinases. May act as a scaffolding protein enabling SRC family protein kinases to phosphorylate and activate PI3-kinase. Binds IGF2 RNA and promotes the production of IGF2 protein. This Mus musculus (Mouse) protein is Constitutive coactivator of PPAR-gamma-like protein 1 (FAM120A).